The chain runs to 413 residues: Gamma-glutamyl phosphate reductase (413 aa).

The protein belongs to the gamma-glutamyl phosphate reductase family.

It is found in the cytoplasm. It catalyses the reaction L-glutamate 5-semialdehyde + phosphate + NADP(+) = L-glutamyl 5-phosphate + NADPH + H(+). It functions in the pathway amino-acid biosynthesis; L-proline biosynthesis; L-glutamate 5-semialdehyde from L-glutamate: step 2/2. Its function is as follows. Catalyzes the NADPH-dependent reduction of L-glutamate 5-phosphate into L-glutamate 5-semialdehyde and phosphate. The product spontaneously undergoes cyclization to form 1-pyrroline-5-carboxylate. The protein is Gamma-glutamyl phosphate reductase of Lactococcus lactis subsp. cremoris (strain MG1363).